Here is an 825-residue protein sequence, read N- to C-terminus: Trimethylamine-N-oxide reductase (825 aa).

The segment at residues M1 to A40 is a signal peptide (tat-type signal). S187 provides a ligand contact to Mo-bis(molybdopterin guanine dinucleotide).

The protein belongs to the prokaryotic molybdopterin-containing oxidoreductase family. Mo-bis(molybdopterin guanine dinucleotide) serves as cofactor. In terms of processing, predicted to be exported by the Tat system. The position of the signal peptide cleavage has not been experimentally proven.

Its subcellular location is the periplasm. It carries out the reaction trimethylamine + 2 Fe(III)-[cytochrome c] + H2O = trimethylamine N-oxide + 2 Fe(II)-[cytochrome c] + 3 H(+). In terms of biological role, reduces trimethylamine-N-oxide (TMAO) into trimethylamine; an anaerobic reaction coupled to energy-yielding reactions. The sequence is that of Trimethylamine-N-oxide reductase (torZ) from Haemophilus influenzae (strain ATCC 51907 / DSM 11121 / KW20 / Rd).